The following is a 329-amino-acid chain: VSG expression site-associated protein 221A (329 aa).

A signal peptide spans 1–23 (MKVEIVELVVLLFSVTCVDAWLQ). N-linked (GlcNAc...) asparagine glycans are attached at residues N73, N294, and N308.

Not known but may be related to activation of the variant surface glycoprotein genes. The protein is VSG expression site-associated protein 221A of Trypanosoma brucei brucei.